Consider the following 663-residue polypeptide: Beta-galactosidase BgaH (663 aa).

Position 103 (arginine 103) interacts with substrate. Position 107 (cysteine 107) interacts with Zn(2+). Position 141 (asparagine 141) interacts with substrate. Glutamate 142 acts as the Proton donor in catalysis. Zn(2+) is bound by residues cysteine 151, cysteine 153, and cysteine 156. The Nucleophile role is filled by glutamate 311. Residues tryptophan 319 and 359-362 (EQYH) each bind substrate.

It belongs to the glycosyl hydrolase 42 family. As to quaternary structure, homodimer.

It carries out the reaction Hydrolysis of terminal non-reducing beta-D-galactose residues in beta-D-galactosides.. Requires 4 M NaCl for maximal activity. Loss of activity if DTT or beta-mercaptoethanol is omitted from buffers. Addition of 5-20 mM EDTA, 1 mM Cu(2+) or 1 mM Zn(2+) results in loss of activity. In terms of biological role, when overexpressed, cleaves several different substrates including o-nitrophenyl-beta-D-galactopyranoside (ONPG), chromogen 5-bromo-4-chloro-3-indolyl-beta-D-galactopyranoside (X-Gal) and lactulose, but not lactose. Also has beta-D-fucosidase activity. No beta-L-fucosidase, beta-glucosidase, beta-arabinosidase or beta-xylosidase activity. This chain is Beta-galactosidase BgaH, found in Haloferax lucentense (strain DSM 14919 / JCM 9276 / NCIMB 13854 / Aa 2.2) (Haloferax alicantei).